A 386-amino-acid chain; its full sequence is 1-deoxy-D-xylulose 5-phosphate reductoisomerase (386 aa).

The NADPH site is built by Thr-7, Gly-8, Ser-9, Ile-10, Ala-33, and Asn-124. Position 125 (Lys-125) interacts with 1-deoxy-D-xylulose 5-phosphate. Residue Glu-126 coordinates NADPH. Asp-148 is a Mn(2+) binding site. 1-deoxy-D-xylulose 5-phosphate is bound by residues Ser-149, Glu-150, Ser-174, and His-197. Glu-150 is a binding site for Mn(2+). Gly-203 serves as a coordination point for NADPH. 1-deoxy-D-xylulose 5-phosphate contacts are provided by Ser-210, Asn-215, Lys-216, and Glu-219. Glu-219 is a Mn(2+) binding site.

This sequence belongs to the DXR family. Mg(2+) is required as a cofactor. The cofactor is Mn(2+).

The catalysed reaction is 2-C-methyl-D-erythritol 4-phosphate + NADP(+) = 1-deoxy-D-xylulose 5-phosphate + NADPH + H(+). It participates in isoprenoid biosynthesis; isopentenyl diphosphate biosynthesis via DXP pathway; isopentenyl diphosphate from 1-deoxy-D-xylulose 5-phosphate: step 1/6. Catalyzes the NADPH-dependent rearrangement and reduction of 1-deoxy-D-xylulose-5-phosphate (DXP) to 2-C-methyl-D-erythritol 4-phosphate (MEP). The sequence is that of 1-deoxy-D-xylulose 5-phosphate reductoisomerase from Kitasatospora griseola (Streptomyces griseolosporeus).